The primary structure comprises 433 residues: T-box transcription factor T (433 aa).

Residues 49–217 constitute a DNA-binding region (T-box); sequence LWLRFKELTN…YNPFAKAFLD (169 aa).

As to quaternary structure, monomer. Binds DNA as a monomer.

Its subcellular location is the nucleus. In terms of biological role, involved in the transcriptional regulation of genes required for mesoderm formation and differentiation. Binds to a palindromic site (called T site) and activates gene transcription when bound to such a site. The sequence is that of T-box transcription factor T from Gallus gallus (Chicken).